Consider the following 336-residue polypeptide: MIVLGIESSCDETGLAIYDYSKKKLIADELYSQVKLHKKYGGVVPELASREHIAKLNLLAKKIFKETGLSFEDIDCIAYTAMPGLVGALMVGATFAKTLGLIHNIDTIAVHHLEGHLLSPLLDHNSNIEYPFVALLVSGGHTQLFEVKEFGEYSLLGESIDDAAGEAFDKTTKLLGMGYPGGVEVANLADQATDKSKYILPRPMKNKPNLDFSFSGLKTAVLNTWYDEQDQSLENKANLCYAFQDAAIDVLVSKCAKALQKTKNTRLVISGGVSANKLLRHQLDLLAKNRGYQIFFPPMKYCTDNGAMIALAGAYRYVNGFKDSNLEINVKARSPL.

The Fe cation site is built by histidine 112 and histidine 116. Substrate contacts are provided by residues 136 to 140 (LVSGG), aspartate 169, glycine 182, and asparagine 276. Residue aspartate 304 coordinates Fe cation.

This sequence belongs to the KAE1 / TsaD family. The cofactor is Fe(2+).

The protein localises to the cytoplasm. The enzyme catalyses L-threonylcarbamoyladenylate + adenosine(37) in tRNA = N(6)-L-threonylcarbamoyladenosine(37) in tRNA + AMP + H(+). Required for the formation of a threonylcarbamoyl group on adenosine at position 37 (t(6)A37) in tRNAs that read codons beginning with adenine. Is involved in the transfer of the threonylcarbamoyl moiety of threonylcarbamoyl-AMP (TC-AMP) to the N6 group of A37, together with TsaE and TsaB. TsaD likely plays a direct catalytic role in this reaction. In Francisella tularensis subsp. tularensis (strain FSC 198), this protein is tRNA N6-adenosine threonylcarbamoyltransferase.